Reading from the N-terminus, the 129-residue chain is ATP synthase epsilon chain (129 aa).

Belongs to the ATPase epsilon chain family. As to quaternary structure, F-type ATPases have 2 components, CF(1) - the catalytic core - and CF(0) - the membrane proton channel. CF(1) has five subunits: alpha(3), beta(3), gamma(1), delta(1), epsilon(1). CF(0) has three main subunits: a, b and c.

The protein localises to the cell inner membrane. Its function is as follows. Produces ATP from ADP in the presence of a proton gradient across the membrane. In Nitratiruptor sp. (strain SB155-2), this protein is ATP synthase epsilon chain.